Consider the following 465-residue polypeptide: Cytochrome P450 85A1 (465 aa).

A helical membrane pass occupies residues 2–22; that stretch reads GAMMVMMGLLLIIVSLCSALL. A heme-binding site is contributed by Cys-415.

The protein belongs to the cytochrome P450 family. Heme is required as a cofactor. In terms of tissue distribution, mainly expressed in apical shoots, hypocotyls, siliques and roots. Also present in the female gametophyte.

The protein resides in the membrane. It catalyses the reaction 6-deoxoteasterone + reduced [NADPH--hemoprotein reductase] + O2 = 6alpha-hydroxyteasterone + oxidized [NADPH--hemoprotein reductase] + H2O + H(+). The catalysed reaction is 6alpha-hydroxytyphasterol + reduced [NADPH--hemoprotein reductase] + O2 = teasterone + oxidized [NADPH--hemoprotein reductase] + 2 H2O + H(+). It carries out the reaction 3-dehydro-6-deoxoteasterone + reduced [NADPH--hemoprotein reductase] + O2 = 3-dehydro-6alpha-hydroxyteasterone + oxidized [NADPH--hemoprotein reductase] + H2O + H(+). The enzyme catalyses 3-dehydro-6alpha-hydroxyteasterone + reduced [NADPH--hemoprotein reductase] + O2 = 3-dehydroteasterone + oxidized [NADPH--hemoprotein reductase] + 2 H2O + H(+). It catalyses the reaction 6-deoxotyphasterol + reduced [NADPH--hemoprotein reductase] + O2 = 6alpha-hydroxytyphasterol + oxidized [NADPH--hemoprotein reductase] + H2O + H(+). The catalysed reaction is 6alpha-hydroxytyphasterol + reduced [NADPH--hemoprotein reductase] + O2 = typhasterol + oxidized [NADPH--hemoprotein reductase] + 2 H2O + H(+). It carries out the reaction 6-deoxocastasterone + reduced [NADPH--hemoprotein reductase] + O2 = 6alpha-hydroxycastasterone + oxidized [NADPH--hemoprotein reductase] + H2O + H(+). The enzyme catalyses 6alpha-hydroxycastasterone + reduced [NADPH--hemoprotein reductase] + O2 = castasterone + oxidized [NADPH--hemoprotein reductase] + 2 H2O + H(+). It catalyses the reaction 6-deoxocastasterone + 2 reduced [NADPH--hemoprotein reductase] + 2 O2 = castasterone + 2 oxidized [NADPH--hemoprotein reductase] + 3 H2O + 2 H(+). The catalysed reaction is 6-deoxoteasterone + 2 reduced [NADPH--hemoprotein reductase] + 2 O2 = teasterone + 2 oxidized [NADPH--hemoprotein reductase] + 3 H2O + 2 H(+). It carries out the reaction 6-deoxotyphasterol + 2 reduced [NADPH--hemoprotein reductase] + 2 O2 = typhasterol + 2 oxidized [NADPH--hemoprotein reductase] + 3 H2O + 2 H(+). The enzyme catalyses 3-dehydro-6-deoxoteasterone + 2 reduced [NADPH--hemoprotein reductase] + 2 O2 = 3-dehydroteasterone + 2 oxidized [NADPH--hemoprotein reductase] + 3 H2O + 2 H(+). Its pathway is plant hormone biosynthesis; brassinosteroid biosynthesis. Catalyzes the C6-oxidation step in brassinosteroids biosynthesis. Converts 6-deoxocastasterone (6-deoxoCS) to castasterone (CS). May also convert 6-deoxoteasterone (6-deoxoTE) to teasterone (TE), 3-dehydro-6-deoxoteasterone (6-deoxo3DT, 6-deoxo-3-DHT) to 3-dehydroteasterone (3DT, 3-DHT), and 6-deoxotyphasterol (6-deoxoTY) to typhasterol (TY). Required for the initiation of female gametogenesis (megagametogenesis). The protein is Cytochrome P450 85A1 of Arabidopsis thaliana (Mouse-ear cress).